The sequence spans 95 residues: Transcription and mRNA export factor ENY2-2 (95 aa).

It belongs to the ENY2 family. In terms of assembly, component of the nuclear pore complex (NPC)-associated TREX-2 complex (transcription and export complex 2). Component of the SAGA transcription coactivator-HAT complex. Within the SAGA complex, participates in a subcomplex of SAGA called the DUB module (deubiquitination module).

It localises to the nucleus. The protein localises to the nucleoplasm. Its function is as follows. Involved in mRNA export coupled transcription activation by association with both the TREX-2 and the SAGA complexes. The transcription regulatory histone acetylation (HAT) complex SAGA is a multiprotein complex that activates transcription by remodeling chromatin and mediating histone acetylation and deubiquitination. Within the SAGA complex, participates in a subcomplex that specifically deubiquitinates histones. The SAGA complex is recruited to specific gene promoters by activators, where it is required for transcription. The TREX-2 complex functions in docking export-competent ribonucleoprotein particles (mRNPs) to the nuclear entrance of the nuclear pore complex (nuclear basket). TREX-2 participates in mRNA export and accurate chromatin positioning in the nucleus by tethering genes to the nuclear periphery. This chain is Transcription and mRNA export factor ENY2-2 (eny2-2), found in Salmo salar (Atlantic salmon).